Here is a 782-residue protein sequence, read N- to C-terminus: Gelsolin (782 aa).

The signal sequence occupies residues 1 to 27 (MAPHRPAPALLCALSLALCALSLPVRA). The actin-severing stretch occupies residues 53 to 176 (VVEHPEFLKA…YKKGGVASGF (124 aa)). Residues 76–158 (FDLVPVPTNL…VQGFESATFL (83 aa)) form a Gelsolin-like 1 repeat. Tyr86 is modified (phosphotyrosine; by SRC; in vitro). Residues Gly92, Asp93, Glu124, Asp136, Gly141, and Ala143 each contribute to the Ca(2+) site. The actin-actin interfilament contact point stretch occupies residues 123–126 (DESG). 162–169 (KSGLKYKK) contributes to the a 1,2-diacyl-sn-glycero-3-phospho-(1D-myo-inositol-4,5-bisphosphate) binding site. Val172 is a binding site for Ca(2+). Residue 188 to 196 (RLFQVKGRR) participates in a 1,2-diacyl-sn-glycero-3-phospho-(1D-myo-inositol-4,5-bisphosphate) binding. Residues 198–270 (VRATEVPVSW…SEEGTEPEAM (73 aa)) form a Gelsolin-like 2 repeat. Ca(2+)-binding residues include Gly213 and Asp214. A disulfide bridge links Cys215 with Cys228. Glu236 provides a ligand contact to Ca(2+). Positions 247–262 (IRDNERSGRARVHVSE) are enriched in basic and acidic residues. A disordered region spans residues 247-285 (IRDNERSGRARVHVSEEGTEPEAMLQVLGPKPALPAGTE). Ca(2+) is bound by residues Asp286, Glu329, Asp330, and Glu354. A Gelsolin-like 3 repeat occupies 317–389 (DENPFAQGAL…LPEGGETPLF (73 aa)). At Tyr409 the chain carries Phosphotyrosine; by SRC; in vitro. Residues 434 to 782 (AAQHGMDDDG…LDRAMAELAA (349 aa)) are actin-binding, Ca-sensitive. Residues 455-536 (SNKVPVDPAT…VQGKEPAHLM (82 aa)) form a Gelsolin-like 4 repeat. The residue at position 465 (Tyr465) is a Phosphotyrosine; by SRC. Ca(2+)-binding residues include Gly471, Asp472, Glu502, Asp514, Gly519, Pro521, and Thr551. The Gelsolin-like 5 repeat unit spans residues 576 to 642 (TRAVEVLPKA…AEGSEPDGFW (67 aa)). Lys584 is modified (N6-acetyllysine). Residues Asn591 and Asp592 each coordinate Ca(2+). Position 603 is a phosphotyrosine; by SRC; in vitro (Tyr603). Glu614 lines the Ca(2+) pocket. Tyr651 bears the Phosphotyrosine; by SRC; in vitro mark. Residues 681-756 (IEEVPGELMQ…VKQGFEPPSF (76 aa)) form a Gelsolin-like 6 repeat. 3 residues coordinate Ca(2+): Asp696, Asp697, and Glu719. A Phosphothreonine modification is found at Thr742.

The protein belongs to the villin/gelsolin family. Binds to actin and to fibronectin. Identified in a complex composed of ACTA1, COBL, GSN and TMSB4X. Interacts with the inactive form of EIF2AK2/PKR. Interacts with FLII. In terms of processing, phosphorylation on Tyr-86, Tyr-409, Tyr-465, Tyr-603 and Tyr-651 in vitro is induced in presence of phospholipids. Phagocytic cells, platelets, fibroblasts, nonmuscle cells, smooth and skeletal muscle cells.

Its subcellular location is the cytoplasm. The protein localises to the cytoskeleton. The protein resides in the secreted. In terms of biological role, calcium-regulated, actin-modulating protein that binds to the plus (or barbed) ends of actin monomers or filaments, preventing monomer exchange (end-blocking or capping). It can promote the assembly of monomers into filaments (nucleation) as well as sever filaments already formed. Plays a role in ciliogenesis. In Homo sapiens (Human), this protein is Gelsolin (GSN).